We begin with the raw amino-acid sequence, 371 residues long: Capsular polysaccharide phosphotransferase cps12A (371 aa).

This sequence belongs to the stealth family.

Part of a capsular polysaccharide synthesis locus. The protein is Capsular polysaccharide phosphotransferase cps12A (cps12A) of Actinobacillus pleuropneumoniae (Haemophilus pleuropneumoniae).